The following is a 588-amino-acid chain: Protein kintoun (588 aa).

Disordered regions lie at residues 199–223, 338–498, and 510–535; these read PGYE…PENS, PPLE…SSQE, and AANV…ADED. Over residues 202–212 the composition is skewed to basic and acidic residues; that stretch reads EAKEPPEERDL. The segment covering 350–361 has biased composition (polar residues); sequence PNPTSDPQNENQ. 2 stretches are compositionally biased toward basic and acidic residues: residues 362 to 382 and 393 to 433; these read TRVE…HQRG and QVLE…KFEL. Positions 435–447 are enriched in polar residues; that stretch reads DVQQENKGNCSNT. A compositionally biased stretch (basic and acidic residues) spans 448 to 460; sequence KEVKCCRRTKDSL.

This sequence belongs to the PIH1 family. Kintoun subfamily.

The protein resides in the cytoplasm. The protein localises to the dynein axonemal particle. Required for cytoplasmic pre-assembly of axonemal dyneins, thereby playing a central role in motility in cilia and flagella. Involved in pre-assembly of dynein arm complexes in the cytoplasm before intraflagellar transport loads them for the ciliary compartment. The chain is Protein kintoun from Oryzias latipes (Japanese rice fish).